The following is a 46-amino-acid chain: Cysteine-rich venom protein asurin-1 (46 aa).

The protein belongs to the CRISP family. Contains 8 disulfide bonds. Expressed by the venom gland.

Its subcellular location is the secreted. Its function is as follows. Blocks contraction of smooth muscle elicited by high potassium-induced depolarization, but does not block caffeine-stimulated contraction. May target voltage-gated calcium channels on smooth muscle. The protein is Cysteine-rich venom protein asurin-1 of Austrelaps superbus (Lowland copperhead snake).